Here is a 252-residue protein sequence, read N- to C-terminus: Imidazole glycerol phosphate synthase subunit HisF (252 aa).

Active-site residues include D11 and D130.

The protein belongs to the HisA/HisF family. Heterodimer of HisH and HisF.

The protein localises to the cytoplasm. It catalyses the reaction 5-[(5-phospho-1-deoxy-D-ribulos-1-ylimino)methylamino]-1-(5-phospho-beta-D-ribosyl)imidazole-4-carboxamide + L-glutamine = D-erythro-1-(imidazol-4-yl)glycerol 3-phosphate + 5-amino-1-(5-phospho-beta-D-ribosyl)imidazole-4-carboxamide + L-glutamate + H(+). It participates in amino-acid biosynthesis; L-histidine biosynthesis; L-histidine from 5-phospho-alpha-D-ribose 1-diphosphate: step 5/9. Functionally, IGPS catalyzes the conversion of PRFAR and glutamine to IGP, AICAR and glutamate. The HisF subunit catalyzes the cyclization activity that produces IGP and AICAR from PRFAR using the ammonia provided by the HisH subunit. This is Imidazole glycerol phosphate synthase subunit HisF from Polynucleobacter necessarius subsp. necessarius (strain STIR1).